Consider the following 168-residue polypeptide: Transcription antitermination protein NusB (168 aa).

Belongs to the NusB family.

Its function is as follows. Involved in transcription antitermination. Required for transcription of ribosomal RNA (rRNA) genes. Binds specifically to the boxA antiterminator sequence of the ribosomal RNA (rrn) operons. The sequence is that of Transcription antitermination protein NusB from Bradyrhizobium sp. (strain ORS 278).